The chain runs to 309 residues: Glutaminase (309 aa).

Residues Ser64, Asn114, Glu160, Asn167, Tyr191, Tyr243, and Val261 each contribute to the substrate site.

The protein belongs to the glutaminase family. As to quaternary structure, homotetramer.

The enzyme catalyses L-glutamine + H2O = L-glutamate + NH4(+). This is Glutaminase from Agrobacterium fabrum (strain C58 / ATCC 33970) (Agrobacterium tumefaciens (strain C58)).